The primary structure comprises 189 residues: Large ribosomal subunit protein uL10 (189 aa).

This sequence belongs to the universal ribosomal protein uL10 family. In terms of assembly, part of the ribosomal stalk of the 50S ribosomal subunit. The N-terminus interacts with L11 and the large rRNA to form the base of the stalk. The C-terminus forms an elongated spine to which L12 dimers bind in a sequential fashion forming a multimeric L10(L12)X complex.

In terms of biological role, forms part of the ribosomal stalk, playing a central role in the interaction of the ribosome with GTP-bound translation factors. In Rippkaea orientalis (strain PCC 8801 / RF-1) (Cyanothece sp. (strain PCC 8801)), this protein is Large ribosomal subunit protein uL10.